The primary structure comprises 550 residues: Cytochrome P450 monooxygenase FFUJ_09176 (550 aa).

An N-terminal signal peptide occupies residues Met1–Ser31. The segment covering Phe430–Ser441 has biased composition (basic and acidic residues). The disordered stretch occupies residues Phe430–Val451. Cys466 provides a ligand contact to heme.

This sequence belongs to the cytochrome P450 family.

In terms of biological role, cytochrome P450 monooxygenase; part of the DMATS1 gene cluster that mediates the biosynthesis of a reversely N-prenylated monomeric L-tryptophan (r-N-DMAT). Seems not to contribute to the final DMATS1 product. This Gibberella fujikuroi (strain CBS 195.34 / IMI 58289 / NRRL A-6831) (Bakanae and foot rot disease fungus) protein is Cytochrome P450 monooxygenase FFUJ_09176.